Consider the following 272-residue polypeptide: MAASPPLPTSIDGGQVLDDMEVVEMKYLFGKVLMPSDVSWDTEQLVIPDEHVGKLLDMVVMNRPEGGFFVVVVEDGEVTGKLWLFRYWKRDDVHCLTKGWGCYAREKGLRAGDTVSFFHSTACGRFFICCRCTCMSFLSLPTTSHRIHGSSVLPQPRAAQEAHHPFSGHATLCLGNKASDHSAPARHATASLGCAAAQPPQVPPTPTPRRRRRSMMVHPEPPEHTTDGMPVILESMALVSTPPVAKRVRLFGVYIDVPPLRPGGEATQDFNP.

Residues Gly-30–Cys-134 constitute a DNA-binding region (TF-B3). Residues Thr-189 to Asp-227 form a disordered region.

It localises to the nucleus. The chain is Putative B3 domain-containing protein Os02g0455900 from Oryza sativa subsp. japonica (Rice).